Reading from the N-terminus, the 93-residue chain is Defensin-like protein 229 (93 aa).

The first 19 residues, 1–19 (MKSTTLFMVSCVLIFCVLS), serve as a signal peptide directing secretion. 4 cysteine pairs are disulfide-bonded: cysteine 38–cysteine 93, cysteine 48–cysteine 72, cysteine 56–cysteine 84, and cysteine 70–cysteine 86.

It belongs to the DEFL family. Flower buds.

The protein resides in the secreted. The sequence is that of Defensin-like protein 229 (SCRL27) from Arabidopsis thaliana (Mouse-ear cress).